The chain runs to 562 residues: Urocanate hydratase (562 aa).

NAD(+)-binding positions include 52 to 53 (GG), Gln130, 176 to 178 (GMG), Glu196, Arg201, 242 to 243 (NA), 263 to 267 (QTSAH), 273 to 274 (YL), and Tyr322. Cys410 is a catalytic residue. Gly492 is a binding site for NAD(+).

Belongs to the urocanase family. NAD(+) serves as cofactor.

Its subcellular location is the cytoplasm. It catalyses the reaction 4-imidazolone-5-propanoate = trans-urocanate + H2O. Its pathway is amino-acid degradation; L-histidine degradation into L-glutamate; N-formimidoyl-L-glutamate from L-histidine: step 2/3. Its function is as follows. Catalyzes the conversion of urocanate to 4-imidazolone-5-propionate. This Klebsiella pneumoniae subsp. pneumoniae (strain ATCC 700721 / MGH 78578) protein is Urocanate hydratase.